Consider the following 468-residue polypeptide: Probable Xaa-Pro aminopeptidase PEPP (468 aa).

4 residues coordinate Mn(2+): D264, D275, E398, and E438.

This sequence belongs to the peptidase M24B family. Requires Mn(2+) as cofactor.

It catalyses the reaction Release of any N-terminal amino acid, including proline, that is linked to proline, even from a dipeptide or tripeptide.. Functionally, catalyzes the removal of a penultimate prolyl residue from the N-termini of peptides. The polypeptide is Probable Xaa-Pro aminopeptidase PEPP (PEPP) (Ajellomyces dermatitidis (strain ER-3 / ATCC MYA-2586) (Blastomyces dermatitidis)).